We begin with the raw amino-acid sequence, 2376 residues long: MAG2-interacting protein 2 (2376 aa).

Forms a complex with MAG2, ZW10/MIP1 and MIP3 on the endoplasmic reticulum.

It is found in the endoplasmic reticulum membrane. In terms of biological role, required for proper maturation of seed storage proteins. Forms a complex with MAG2, ZW10/MIP1 and MIP3 on the endoplasmic reticulum that may be responsible for efficient transport of seed storage proteins. In Arabidopsis thaliana (Mouse-ear cress), this protein is MAG2-interacting protein 2.